The primary structure comprises 725 residues: MSAFSEAINSLFSGHYADPFSLLGMHHSSKGLEVRALLPDADAAWVVDASNGRKIVELERVDGRGFFCGLVPNRKHDFHYQLAVTWREETWVIEDPYRFGPLLQDMDIWLLAEGTHLRPYERLGAHLETLDGVEGTRFAVWAPNAQRVSVVGQFNFWDGRRHPMRLRKENGIWELFLPDVKAGQLYKYEMIDSHGSVRLKADPYAFEAQMRPDTASLITPLPEKVPTNEARREANSLRSPISIYEVHLGSWRRHTDNNFWLSYQELANQLIDYVQYMGFTHVELMPINEHPFDGSWGYQPLGLYAPTRRFGTASDFRAFVDALHGAGINVLLDWVPGHFPGDEYGLAQFDGTALYEYSDPREGYHQDWNTLIYNYGRHEVRNYLAGNALFWMERYGIDGLRVDAVASMIYRDYSRSEGEWVPNHYGGKENLEAIAFLRYTNHTLGHAAPAAITLAEESTDYPGVTLPPDCNGLGFHYKWNMGWMHDTLTYMQLDPVHRKHHHDLLTFGMLYAYSENFVLPLSHDEVVHGKRSLLDRMPGDVWQKFANLRAYYGFMWAYPGKKLLFMGCEFAQGREWNHDASLDWHLLDEPEGWHRGVQALVRDLNHYYRQQPSLYQLDFQPQGFEWLVVDDRENSVFAFIRRDEQGNEVLVVSNFTPVPRYGYRIGINQPGGWREVMNTDSVHYNGSDQGNVGTIYSEEWGSHQRQHSLVLTIPPLATLYLVKEA.

Catalysis depends on Asp-403, which acts as the Nucleophile. Glu-456 (proton donor) is an active-site residue.

Belongs to the glycosyl hydrolase 13 family. GlgB subfamily. Monomer.

It carries out the reaction Transfers a segment of a (1-&gt;4)-alpha-D-glucan chain to a primary hydroxy group in a similar glucan chain.. Its pathway is glycan biosynthesis; glycogen biosynthesis. Functionally, catalyzes the formation of the alpha-1,6-glucosidic linkages in glycogen by scission of a 1,4-alpha-linked oligosaccharide from growing alpha-1,4-glucan chains and the subsequent attachment of the oligosaccharide to the alpha-1,6 position. The sequence is that of 1,4-alpha-glucan branching enzyme GlgB from Pectobacterium atrosepticum (strain SCRI 1043 / ATCC BAA-672) (Erwinia carotovora subsp. atroseptica).